The chain runs to 600 residues: Methionine--tRNA ligase (600 aa).

The 'HIGH' region signature appears at 12 to 22 (PYANGPRHIGH). Zn(2+) contacts are provided by Cys144, Cys147, Cys157, and Cys160. Residues 351 to 355 (KFSSS) carry the 'KMSKS' region motif. Ser354 lines the ATP pocket.

Belongs to the class-I aminoacyl-tRNA synthetase family. MetG type 1 subfamily. In terms of assembly, monomer. The cofactor is Zn(2+).

It is found in the cytoplasm. The enzyme catalyses tRNA(Met) + L-methionine + ATP = L-methionyl-tRNA(Met) + AMP + diphosphate. In terms of biological role, is required not only for elongation of protein synthesis but also for the initiation of all mRNA translation through initiator tRNA(fMet) aminoacylation. This Chloroflexus aggregans (strain MD-66 / DSM 9485) protein is Methionine--tRNA ligase.